The primary structure comprises 498 residues: DNA-directed RNA polymerase subunit Rpo2N (498 aa).

This sequence belongs to the RNA polymerase beta chain family. In terms of assembly, part of the RNA polymerase complex.

It is found in the cytoplasm. It carries out the reaction RNA(n) + a ribonucleoside 5'-triphosphate = RNA(n+1) + diphosphate. In terms of biological role, DNA-dependent RNA polymerase (RNAP) catalyzes the transcription of DNA into RNA using the four ribonucleoside triphosphates as substrates. The Rpo2 subunit (Rpo2N and Rpo2C in this organism) is implicated in DNA promoter recognition and in nucleotide binding. The chain is DNA-directed RNA polymerase subunit Rpo2N from Methanocaldococcus jannaschii (strain ATCC 43067 / DSM 2661 / JAL-1 / JCM 10045 / NBRC 100440) (Methanococcus jannaschii).